Consider the following 181-residue polypeptide: Adenine phosphoribosyltransferase (181 aa).

This sequence belongs to the purine/pyrimidine phosphoribosyltransferase family. Homodimer.

The protein resides in the cytoplasm. The enzyme catalyses AMP + diphosphate = 5-phospho-alpha-D-ribose 1-diphosphate + adenine. It participates in purine metabolism; AMP biosynthesis via salvage pathway; AMP from adenine: step 1/1. Its function is as follows. Catalyzes a salvage reaction resulting in the formation of AMP, that is energically less costly than de novo synthesis. The polypeptide is Adenine phosphoribosyltransferase (Brucella anthropi (strain ATCC 49188 / DSM 6882 / CCUG 24695 / JCM 21032 / LMG 3331 / NBRC 15819 / NCTC 12168 / Alc 37) (Ochrobactrum anthropi)).